The chain runs to 493 residues: Cytoplasmic tRNA 2-thiolation protein 2 (493 aa).

Ser-489 carries the post-translational modification Phosphoserine.

This sequence belongs to the CTU2/NCS2 family. In terms of assembly, interacts with NCS6 and URM1. May act by forming a heterodimer with NCS6.

It localises to the cytoplasm. It functions in the pathway tRNA modification; 5-methoxycarbonylmethyl-2-thiouridine-tRNA biosynthesis. In terms of biological role, plays a central role in 2-thiolation of mcm(5)S(2)U at tRNA wobble positions of tRNA(Lys), tRNA(Glu) and tRNA(Gln). May act by forming a heterodimer with NCS6 that ligates sulfur from thiocarboxylated URM1 onto the uridine of tRNAs at wobble position. Prior mcm(5) tRNA modification by the elongator complex is required for 2-thiolation. May also be involved in protein urmylation. The polypeptide is Cytoplasmic tRNA 2-thiolation protein 2 (Saccharomyces cerevisiae (strain YJM789) (Baker's yeast)).